Reading from the N-terminus, the 817-residue chain is Two pore calcium channel protein 1 (817 aa).

Residues 1-101 (MSVILDDDVL…PKDARALAAY (101 aa)) are Cytoplasmic-facing. The interval 22–66 (PLTPSNGLGQEDLPSKNGGGQSGPNSQVPSLVSGADSPPSSPPGH) is disordered. The helical transmembrane segment at 102 to 122 (LFVHNHFFYMMELLTALLLLL) threads the bilayer. The Extracellular segment spans residues 123–137 (LSLCESPAVPALKLR). Residues 138-158 (TYVHATLELFALMVVVFELCM) form a helical membrane-spanning segment. Over 159-172 (KLRWLGFHTFVRHK) the chain is Cytoplasmic. A helical membrane pass occupies residues 173–193 (RTMVKTSVLVVQFIEAIVVLV). At 194 to 202 (RQTSHVRVT) the chain is on the extracellular side. The chain crosses the membrane as a helical span at residues 203–221 (RALRCIFLVDCRYCGGVRR). Over 222-235 (NLRQIFQSLPPFMD) the chain is Cytoplasmic. The chain crosses the membrane as a helical span at residues 236-256 (ILLLLLFFMIIFAILGFYLFS). At 257–263 (TNPSDPY) the chain is on the extracellular side. Positions 264–287 (FNTLENSIVNLFVLLTTANFPDVM) form an intramembrane region, helical; Pore-forming. Residues 288–298 (MPSYSRNPWSC) lie on the Extracellular side of the membrane. The chain crosses the membrane as a helical span at residues 299–319 (VFFIVYLSIELYFIMNLLLAV). At 320–445 (VFDTFNDIEK…NILVNSKAFQ (126 aa)) the chain is on the cytoplasmic side. The helical transmembrane segment at 446–466 (YFMYLVVAVNGVWILVETFML) threads the bilayer. At 467–480 (KGGNFISKHVPWSY) the chain is on the extracellular side. The helical transmembrane segment at 481-501 (LVFLTIYGVELFMKVAGLGPV) threads the bilayer. Residues 502 to 504 (EYL) lie on the Cytoplasmic side of the membrane. The chain crosses the membrane as a helical span at residues 505–527 (SSGWNLFDFSVTAFAFLGLLALT). Over 528 to 535 (LNMEPFYF) the chain is Extracellular. A helical transmembrane segment spans residues 536–550 (IVVLRPLQLLRLFKL). Residues 551 to 574 (KKRYRNVLDTMFELLPRMASLGLT) are Cytoplasmic-facing. Residues 575–595 (LLTFYYSFAIVGMEFFSGRLS) traverse the membrane as a helical segment. Topologically, residues 596 to 630 (PNCCNSSTVADAYRFINHTVGNKTKVEEGYYYLNN) are extracellular. The segment at residues 631–654 (FDNILNSFVTLFELTVVNNWYIIM) is an intramembrane region (helical; Pore-forming). Over 655-671 (EGVTSQTSHWSRLYFMT) the chain is Extracellular. A helical transmembrane segment spans residues 672–692 (FYIVTMVVMTIIVAFILEAFV). Topologically, residues 693–817 (FRMNYSRKSQ…GSRQRSQTVT (125 aa)) are cytoplasmic. Positions 770-794 (SLKMYQEEIQEWYEEHAREQEQQQL) form a coiled coil. The tract at residues 785 to 817 (HAREQEQQQLRGSAPSPAAQQTPGSRQRSQTVT) is disordered. The span at 802–817 (AAQQTPGSRQRSQTVT) shows a compositional bias: polar residues.

This sequence belongs to the calcium channel alpha-1 subunit (TC 1.A.1.11) family. Two pore calcium channel subfamily. In terms of assembly, dimer. Interacts with MTOR; the interaction is required for TPCN1 ATP sensitivity. Interacts with STX7, STX8 and STX12. Interacts with JPT2. Found in a complex with LSM12, TPCN1 and TPCN2. Post-translationally, N-glycosylated. As to expression, widely expressed. Expressed at relatively high level in kidney, liver and lung, and in the kidney it is expressed at inner medullary collecting ducts.

It is found in the lysosome membrane. The protein resides in the endosome membrane. Its subcellular location is the early endosome membrane. It localises to the recycling endosome membrane. It catalyses the reaction Na(+)(in) = Na(+)(out). The enzyme catalyses Ca(2+)(in) = Ca(2+)(out). Na(+) current is inhibited by ATP in a MTORC-dependent manner. ATP sensitivity is independent of PI(3,5)P2. Probably regulated by Mg(2+) ions, cytosolic Mg(2+) selectively inhibits outward current while lysosomal Mg(2+) modestly inhibits both the outward and inward currents. In the absence of Mg(2+), NAADP readily activates TPCN2, with properties similar to PI(3,5)P2. Both current elicited by PI(3,5)P2 as well as NAADP are inhibited by tetrandrine. Its function is as follows. Intracellular channel initially characterized as a non-selective Ca(2+)-permeable channel activated by NAADP (nicotinic acid adenine dinucleotide phosphate), it is also a voltage-gated highly-selective Na(+) channel activated directly by PI(3,5)P2 (phosphatidylinositol 3,5-bisphosphate) that senses pH changes and confers electrical excitability to organelles. Localizes to the early and recycling endosomes membranes where it plays a role in the uptake and processing of proteins and regulates organellar membrane excitability, membrane trafficking and pH homeostasis. Ion selectivity is not fixed but rather agonist-dependent and under defined ionic conditions, can be readily activated by both NAADP and PI(3,5)P2. Required for mTOR-dependent nutrient sensing. This chain is Two pore calcium channel protein 1 (Tpcn1), found in Rattus norvegicus (Rat).